The sequence spans 394 residues: Phosphorylated adapter RNA export protein (394 aa).

The segment covering methionine 1–serine 18 has biased composition (acidic residues). The disordered stretch occupies residues methionine 1 to lysine 33. At alanine 2 the chain carries N-acetylalanine. The necessary for interaction with CBP80 stretch occupies residues alanine 2–valine 329. Residues serine 14, serine 16, serine 65, serine 66, serine 69, and serine 73 each carry the phosphoserine modification. The Nuclear localization signal signature appears at lysine 81–arginine 84. The segment at lysine 83–glycine 111 is disordered. The Nuclear export signal motif lies at valine 130–methionine 139. A compositionally biased stretch (basic and acidic residues) spans lysine 183–glycine 193. The tract at residues lysine 183–proline 211 is disordered. Residues lysine 198–arginine 201 carry the Nuclear localization signal motif. A Phosphoserine modification is found at serine 226. Residues glutamate 228–glutamine 328 form a sufficient for poly U RNA-binding region. Positions glycine 279 to glycine 287 are necessary for poly U RNA-binding and snRNA export. Phosphothreonine is present on threonine 296. Serine 356 and serine 368 each carry phosphoserine.

It belongs to the PHAX family. As to quaternary structure, found in a U snRNA export complex with PHAX/RNUXA, NCBP1/CBP80, NCBP2/CBP20, RAN, XPO1 and m7G-capped RNA. Part of a precomplex with PHAX/RNUXA, NCBP1/CBP80, NCBP2/CBP20 and m7G-capped RNA. Interacts with NCBP1/CBP80. Found in a complex with snoRNA. Interacts with NCBP2/CBP20. Interacts with DDX39A; this interaction stimulates PHAX RNA binding activity. Phosphorylated in the nucleus. Dephosphorylated in the cytoplasm.

The protein localises to the nucleus. The protein resides in the nucleoplasm. It is found in the cajal body. It localises to the cytoplasm. In terms of biological role, a phosphoprotein adapter involved in the XPO1-mediated U snRNA export from the nucleus. Bridge components required for U snRNA export, the cap binding complex (CBC)-bound snRNA on the one hand and the GTPase Ran in its active GTP-bound form together with the export receptor XPO1 on the other. Its phosphorylation in the nucleus is required for U snRNA export complex assembly and export, while its dephosphorylation in the cytoplasm causes export complex disassembly. It is recycled back to the nucleus via the importin alpha/beta heterodimeric import receptor. The directionality of nuclear export is thought to be conferred by an asymmetric distribution of the GTP- and GDP-bound forms of Ran between the cytoplasm and nucleus. Its compartmentalized phosphorylation cycle may also contribute to the directionality of export. Binds strongly to m7G-capped U1 and U5 small nuclear RNAs (snRNAs) in a sequence-unspecific manner and phosphorylation-independent manner. Also plays a role in the biogenesis of U3 small nucleolar RNA (snoRNA). Involved in the U3 snoRNA transport from nucleoplasm to Cajal bodies. Binds strongly to m7G-capped U3, U8 and U13 precursor snoRNAs and weakly to trimethylated (TMG)-capped U3, U8 and U13 snoRNAs. Also binds to telomerase RNA. This Homo sapiens (Human) protein is Phosphorylated adapter RNA export protein (PHAX).